The sequence spans 310 residues: Putative HTH-type transcriptional regulatory protein SSO0942 (310 aa).

The HTH cro/C1-type domain occupies 125–180 (LKHKREEMGYSIGDVAKFLGVSRKAIYDYEKGDSDVSLEVAEKLIDLFGDDIIGDV). A DNA-binding region (H-T-H motif) is located at residues 136–155 (IGDVAKFLGVSRKAIYDYEK).

The polypeptide is Putative HTH-type transcriptional regulatory protein SSO0942 (Saccharolobus solfataricus (strain ATCC 35092 / DSM 1617 / JCM 11322 / P2) (Sulfolobus solfataricus)).